The sequence spans 372 residues: MEEWRNFLDIKVINESSLVTVDNLSLQLDISSEKAQEYLNMFYQGNDFLYPIYLIHGQPIDDEINLEIDEESQPISNFPVLQYILCDKSSLQEKQSRLKSGYKTVIFALSSAPLSDFDELLPAVYEIREKDVLYKKEDADKYGFIFNENSVPRVLKKAPSTHSPQLSVPSKTSTIDKTDTRSTEKTKGKDIFSNARNQKGNSSRKNKKAPLENHKEKEPLLPKEEKLSEQAKRERDDLKNIMQLEDESVSTTSVHDSEDDNLDSNNFQLEIGTEAKSAAPDEPQEIIKSVSGGKRRGKRKVKKYATTKDEEGFLVTKEEEVWESFSEDENISTGTSNVVRNKPTTVNIATKKKNTAQSKPQQKSIMSFFGKK.

Disordered stretches follow at residues lysine 156–serine 264 and lysine 352–lysine 372. Residues serine 160 to serine 173 show a composition bias toward polar residues. Phosphoserine is present on serine 163. Basic and acidic residues-rich tracts occupy residues threonine 174 to aspartate 190 and alanine 209 to lysine 239. The span at threonine 355–isoleucine 365 shows a compositional bias: polar residues.

Heterotetramer that consist of the pol3, cdc1, cdc27 and cdm1 subunits. Cdc27 interacts with cdc1 and is required for dimerization of the tetramer.

It localises to the nucleus. This is DNA polymerase delta subunit 3 (cdc27) from Schizosaccharomyces pombe (strain 972 / ATCC 24843) (Fission yeast).